A 327-amino-acid chain; its full sequence is Thiosulfate dehydrogenase (327 aa).

Positions 1 to 26 are cleaved as a signal peptide; it reads MKIIPYRKRSVLIATIFAISAVGITG. Positions 66-78 are enriched in low complexity; sequence NDMTATAGGTDTA. The disordered stretch occupies residues 66-93; sequence NDMTATAGGTDTASGKPTIKMPDESTIP. Cytochrome c domains lie at 99–196 and 219–305; these read AAVR…SWLS and PNTD…THLP. The heme c site is built by Cys-125, Cys-128, His-129, Cys-232, Cys-235, and His-236.

Monomer. Binds 2 heme c groups covalently per subunit.

The protein resides in the periplasm. The enzyme catalyses 2 thiosulfate + 2 Fe(III)-[cytochrome c] = tetrathionate + 2 Fe(II)-[cytochrome c] + 2 H(+). In terms of biological role, catalyzes the oxidation of 2 molecules of thiosulfate to tetrathionate. This chain is Thiosulfate dehydrogenase (tsdA), found in Psychrobacter arcticus (strain DSM 17307 / VKM B-2377 / 273-4).